A 367-amino-acid chain; its full sequence is Dimethyladenosine transferase 1, mitochondrial (367 aa).

A mitochondrion-targeting transit peptide spans 1 to 16 (MASASRLPPLPALRDF). Residues 30-33 (QNYL), asparagine 31, leucine 33, glycine 58, glutamate 80, aspartate 106, and asparagine 141 each bind S-adenosyl-L-methionine.

Belongs to the class I-like SAM-binding methyltransferase superfamily. rRNA adenine N(6)-methyltransferase family. KsgA subfamily.

The protein localises to the mitochondrion. Probable S-adenosyl-L-methionine-dependent methyltransferase which specifically dimethylates mitochondrial 12S rRNA at the conserved stem loop. Also required for basal transcription of mitochondrial DNA. Stimulates transcription independently of the methyltransferase activity. This is Dimethyladenosine transferase 1, mitochondrial (tfbm-1) from Caenorhabditis elegans.